We begin with the raw amino-acid sequence, 973 residues long: Probable outer membrane protein pmp13 (973 aa).

The signal sequence occupies residues 1–24 (MKTSIRKFLISTTLAPCFASTAFT). Polar residues predominate over residues 284–293 (QNNTASPQNS). The segment at 284-303 (QNNTASPQNSLPAPTPPPTP) is disordered. In terms of domain architecture, Autotransporter spans 691–973 (EDVPGKQLSI…TLDIGSKLRF (283 aa)).

The protein belongs to the PMP outer membrane protein family.

The protein resides in the secreted. It is found in the cell wall. The protein localises to the cell outer membrane. The sequence is that of Probable outer membrane protein pmp13 (pmp13) from Chlamydia pneumoniae (Chlamydophila pneumoniae).